A 221-amino-acid polypeptide reads, in one-letter code: Probable septum site-determining protein MinC (221 aa).

The protein belongs to the MinC family. In terms of assembly, interacts with MinD and FtsZ.

In terms of biological role, cell division inhibitor that blocks the formation of polar Z ring septums. Rapidly oscillates between the poles of the cell to destabilize FtsZ filaments that have formed before they mature into polar Z rings. Prevents FtsZ polymerization. The protein is Probable septum site-determining protein MinC of Aliivibrio fischeri (strain ATCC 700601 / ES114) (Vibrio fischeri).